The sequence spans 596 residues: CRISPR-associated DNA-binding protein Cas12m (596 aa).

Residues 19–53 form a recognition domain (REC1-N) region; it reads EVLRQQLWLAHNLREDLVSLQLAYDDDLKAIWSSY. Positions 54-121 are recognition domain (REC2); it reads PDVAQAEDTM…RDAIAVVKDD (68 aa). Coiled coils occupy residues 55-83 and 91-117; these read DVAQ…ARIE and TELT…AIAV. Residues 122 to 190 form a recognition domain (REC1-C) region; it reads AAERRKARSD…LRHHRFDGSG (69 aa). Residues 191-302 are wedge domain (WED); the sequence is TIAVQLQRQA…RAKLCVTARI (112 aa). The tract at residues 303-313 is linker; sequence GDTEPVTSGPT. The ruvC-I stretch occupies residues 314–541; it reads VALHLGWRST…RDGVPVTIVA (228 aa). Position 317 (H317) interacts with Mg(2+). The interval 541–577 is target nucleic-acid binding (TNB); it reads AAADFTRTHSRCGHVNPADDRYLSNPVRCDGCGAMYD. Zn(2+) contacts are provided by H549, C552, C569, and C572. Residues 578 to 596 are ruvC-II; the sequence is QDRSFVTLMLRAATAPSNP. Residue D579 participates in Mg(2+) binding.

The protein belongs to the CRISPR-associated DNA-binding protein Cas12m family. Binds crRNA and target dsDNA as a monomer. Requires Mg(2+) as cofactor. The cofactor is Zn(2+).

Functionally, CRISPR (clustered regularly interspaced short palindromic repeat), is an adaptive immune system that provides protection against mobile genetic elements (viruses, transposable elements and conjugative plasmids). CRISPR clusters contain sequences complementary to antecedent mobile elements and target invading nucleic acids. CRISPR clusters are transcribed and processed into CRISPR RNA (crRNA). Recognizes a short motif in the CRISPR repeat sequences (the 5' PAM or protospacer adjacent motif, 5'-TTN-3' in this organism) to help distinguish self versus nonself, as targets within the bacterial CRISPR locus do not have PAMs. Upon expression in E.coli as a CRISPR locus inhibits plasmid propagation when targeted to regions essential for plasmid propagation (replication origin and dnaA). The crRNA-Cas12m complex inhibits transcription from target DNA leading to gene silencing. Cas12m-crRNA binds DNA in a PAM-dependent, crRNA-guided fashion. Binds a 17-bp crRNA-ss-target DNA heteroduplex, in a 56 nucleotide crRNA. No dsDNA, ssDNA or RNA nuclease activity is seen for the crRNA-Cas12m complex. Is required to process pre-crRNA to mature crRNA without a tracrRNA. Upon expression in E.coli as a CRISPR region preferentially binds to its associated crRNA. The polypeptide is CRISPR-associated DNA-binding protein Cas12m (Mycolicibacterium mucogenicum (Mycobacterium mucogenicum)).